The following is a 158-amino-acid chain: Nuclear cap-binding protein subunit 2 (158 aa).

Residues Y17, Y40, 109–113, 120–124, and 130–131 contribute to the mRNA site; these read RADWD, RQYGR, and QV. The region spanning 37–115 is the RRM domain; sequence CTLYVGNLSY…RVIRADWDAG (79 aa). The interval 123 to 158 is disordered; that stretch reads GRGKHGGQVRDEYRKDYDPERGGYNRAIAQKGGDRQ. The segment covering 130–145 has biased composition (basic and acidic residues); sequence QVRDEYRKDYDPERGG.

It belongs to the RRM NCBP2 family. Component of the nuclear cap-binding complex (CBC), a heterodimer composed of ncbp-1 and ncbp-2 that interacts with m7GpppG-capped RNA.

Its subcellular location is the nucleus. Functionally, component of the cap-binding complex (CBC), which binds co-transcriptionally to the 5' cap of pre-mRNAs and is involved in various processes such as pre-mRNA splicing and RNA-mediated gene silencing (RNAi). The CBC complex is involved in miRNA-mediated RNA interference and is required for primary microRNAs (miRNAs) processing. In the CBC complex, ncbp-2 recognizes and binds capped RNAs (m7GpppG-capped RNA) but requires ncbp-1 to stabilize the movement of its N-terminal loop and lock the CBC into a high affinity cap-binding state with the cap structure. The chain is Nuclear cap-binding protein subunit 2 (ncbp-2) from Caenorhabditis elegans.